Here is a 430-residue protein sequence, read N- to C-terminus: T-kininogen 2 (430 aa).

An N-terminal signal peptide occupies residues methionine 1–alanine 18. A Pyrrolidone carboxylic acid modification is found at glutamine 19. Positions cysteine 28–lysine 131 constitute a Cystatin kininogen-type 1 domain. 9 cysteine pairs are disulfide-bonded: cysteine 28–cysteine 404, cysteine 83–cysteine 94, cysteine 107–cysteine 125, cysteine 141–cysteine 144, cysteine 205–cysteine 217, cysteine 228–cysteine 247, cysteine 263–cysteine 266, cysteine 327–cysteine 339, and cysteine 350–cysteine 369. Residue asparagine 82 is glycosylated (N-linked (GlcNAc...) asparagine). The Cystatin kininogen-type 2 domain maps to methionine 150–aspartate 253. N-linked (GlcNAc...) asparagine glycans are attached at residues asparagine 168 and asparagine 204. One can recognise a Cystatin kininogen-type 3 domain in the interval valine 272–methionine 375. N-linked (GlcNAc...) asparagine glycosylation occurs at asparagine 326. Residues leucine 410–proline 430 are disordered.

Post-translationally, as T-kinin is preceded by a Met instead of an Arg or Lys, it is not released from its precursor by either tissue or plasma kallikrein. As to expression, plasma.

The protein localises to the secreted. It localises to the extracellular space. Functionally, kininogens are plasma glycoproteins with a number of functions: (1) as precursor of the active peptide bradykinin they effect smooth muscle contraction, induction of hypotension and increase of vascular permeability. (2) They play a role in blood coagulation by helping to position optimally prekallikrein and factor XI next to factor XII. (3) They are inhibitor of thiol proteases. The polypeptide is T-kininogen 2 (Rattus norvegicus (Rat)).